The following is a 381-amino-acid chain: Gustatory and pheromone receptor 39a, isoform D (381 aa).

The Cytoplasmic portion of the chain corresponds to 1 to 43 (MKRNAFEELRVQLRTLKWLGVLRFTIDFNKCLVRENASEERSA). The helical transmembrane segment at 44–64 (WLYLIGVVGITCSLIVYSTYF) threads the bilayer. Residues 65–78 (PSHFIMGKHNTTGN) are Extracellular-facing. An N-linked (GlcNAc...) asparagine glycan is attached at Asn74. A helical membrane pass occupies residues 79-101 (CYALINIRSCSIVTMLIYTQLYI). Over 102–128 (QRFRFVALLQSILRFNQISGSHREEGR) the chain is Cytoplasmic. Residues 129–149 (FAFYYYTHLSLLIICMLNYAY) form a helical membrane-spanning segment. Residues 150 to 172 (GYWTAGVRLTTIPIYLLQYGFSY) lie on the Extracellular side of the membrane. The chain crosses the membrane as a helical span at residues 173-193 (LFLGQVVVLFACIQQILLSIL). Topologically, residues 194–234 (KYYNQVVLKNIKSSKESREFYYNFCKYNQVIWLSYTEINHC) are cytoplasmic. Residues 235 to 255 (FGLLLLLVTGLILLITPSGPF) traverse the membrane as a helical segment. Topologically, residues 256-273 (YLVSTIFEGRFRQNWQFS) are extracellular. The chain crosses the membrane as a helical span at residues 274–294 (LMSFTAILWSLPWIVLLVLAM). Topologically, residues 295–350 (GRNDVQKEANKTAKMLTKVPRTGTGLDRMIEKFLLKNLRQKPILTAYGFFALDKST) are cytoplasmic. Residues 351–371 (LFKLFTAIFTYMVILVQFKEM) form a helical membrane-spanning segment. Residues 372–381 (ENSTKSINKF) are Extracellular-facing. Asn373 carries an N-linked (GlcNAc...) asparagine glycan.

The protein belongs to the insect chemoreceptor superfamily. Gustatory receptor (GR) family. Gr21a subfamily. Expressed in the adult labellar chemosensory neurons and adult thorax and abdomen.

The protein resides in the cell membrane. Its function is as follows. Gustatory receptor which mediates acceptance or avoidance behavior, depending on its substrates. Plays a role in sustaining courtship behavior in males, possibly through the reception of a stimulating arrestant pheromone. The sequence is that of Gustatory and pheromone receptor 39a, isoform D (Gr39a) from Drosophila melanogaster (Fruit fly).